Reading from the N-terminus, the 668-residue chain is Neurexin-3-beta (668 aa).

The first 35 residues, 1-35 (MHLRTNPSICPGRRPAWTLWMCSLFWGCIVSSVWS), serve as a signal peptide directing secretion. The Extracellular segment spans residues 36–593 (SSNVASSASS…EVVRESSSTT (558 aa)). A Laminin G-like domain is found at 84 to 284 (ATYIFGKSGG…NPNIKINGSV (201 aa)). The interval 510 to 529 (TASSSTGMVPKLPAGKMNNR) is disordered. A helical transmembrane segment spans residues 594-614 (GMVVGIVAAAALCILILLYAM). At 615–668 (YKYRNRDEGSYQVDETRNYISNSAQSNGTLMKEKQQSSKSGHKKQKNKDKEYYV) the chain is on the cytoplasmic side. Residues 636-668 (NSAQSNGTLMKEKQQSSKSGHKKQKNKDKEYYV) form a disordered region.

The protein belongs to the neurexin family. Processed by alpha-secretase leading to the formation of an extracellular soluble protein as well as a C-terminal membrane-embedded fragment (CTF). Proteolysis of these CTFs by gamma-secretase releases intracellular domains (ICDs) and extracellular peptides. In terms of tissue distribution, brain and arteries (at protein level).

The protein localises to the membrane. Neuronal cell surface protein that may be involved in cell recognition and cell adhesion. Plays a role in angiogenesis. This is Neurexin-3-beta (NRXN3) from Gallus gallus (Chicken).